The sequence spans 265 residues: Small ribosomal subunit protein uS3 (265 aa).

The region spanning Ile39 to Arg111 is the KH type-2 domain. Positions Phe224–Lys250 are disordered. Basic and acidic residues predominate over residues Arg238–Lys250.

This sequence belongs to the universal ribosomal protein uS3 family. In terms of assembly, part of the 30S ribosomal subunit. Forms a tight complex with proteins S10 and S14.

Binds the lower part of the 30S subunit head. Binds mRNA in the 70S ribosome, positioning it for translation. This Acholeplasma laidlawii protein is Small ribosomal subunit protein uS3.